The chain runs to 106 residues: Iron-sulfur cluster assembly protein CyaY (106 aa).

It belongs to the frataxin family.

Functionally, involved in iron-sulfur (Fe-S) cluster assembly. May act as a regulator of Fe-S biogenesis. This chain is Iron-sulfur cluster assembly protein CyaY, found in Escherichia fergusonii (strain ATCC 35469 / DSM 13698 / CCUG 18766 / IAM 14443 / JCM 21226 / LMG 7866 / NBRC 102419 / NCTC 12128 / CDC 0568-73).